The sequence spans 169 residues: Superoxide dismutase [Cu-Zn] 1 (169 aa).

A signal peptide spans 1–18 (MFEQWDALCAVLFSFSIA). The Cu cation site is built by His-65, His-67, and His-83. An intrachain disulfide couples Cys-72 to Cys-165. Zn(2+)-binding residues include His-83, His-91, His-100, and Asp-103. His-145 contacts Cu cation.

Belongs to the Cu-Zn superoxide dismutase family. The cofactor is Cu cation. Zn(2+) is required as a cofactor.

It catalyses the reaction 2 superoxide + 2 H(+) = H2O2 + O2. In terms of biological role, destroys radicals which are normally produced within the cells and which are toxic to biological systems. In Aquifex aeolicus (strain VF5), this protein is Superoxide dismutase [Cu-Zn] 1 (sodC1).